The primary structure comprises 255 residues: F-box/SPRY domain-containing protein 1 (255 aa).

In terms of domain architecture, F-box spans 3 to 51; that stretch reads DPVAALCNFNVLEVIFSYLDLNDLSRCSQVCRSWHHFLNDENSDVWRWH. A B30.2/SPRY domain is found at 61–253; it reads MKSDLLTSVS…VSMVYLGTPL (193 aa).

This sequence belongs to the FBXO45/Fsn family. In terms of assembly, component of an E3 ubiquitin ligase complex composed of hiw and Fsn.

It localises to the synapse. Its pathway is protein modification; protein ubiquitination. In terms of biological role, required in the presynaptic motoneuron to down-regulate the levels of wnd and restrain synaptic terminal growth at the neuromuscular junction (NMJ). This is F-box/SPRY domain-containing protein 1 from Drosophila willistoni (Fruit fly).